The chain runs to 790 residues: Penicillin-binding protein 1A (790 aa).

Over 1–6 (MYKSLL) the chain is Cytoplasmic. The chain crosses the membrane as a helical; Signal-anchor for type II membrane protein span at residues 7–27 (FCLKIFVFLILVGCGITAYII). Residues 28 to 790 (YHYSRDLPDY…SKEDQSQEIY (763 aa)) lie on the Periplasmic side of the membrane. Residues 49-220 (TRIYSRDGKL…SELNPERNYA (172 aa)) are transglycosylase. Catalysis depends on Glu87, which acts as the Proton donor; for transglycosylase activity. The transpeptidase stretch occupies residues 398 to 711 (DVIVVEAIKE…SNVVLPIFID (314 aa)). The Acyl-ester intermediate; for transpeptidase activity role is filled by Ser457.

In the N-terminal section; belongs to the glycosyltransferase 51 family. The protein in the C-terminal section; belongs to the transpeptidase family.

It is found in the cell inner membrane. The catalysed reaction is [GlcNAc-(1-&gt;4)-Mur2Ac(oyl-L-Ala-gamma-D-Glu-L-Lys-D-Ala-D-Ala)](n)-di-trans,octa-cis-undecaprenyl diphosphate + beta-D-GlcNAc-(1-&gt;4)-Mur2Ac(oyl-L-Ala-gamma-D-Glu-L-Lys-D-Ala-D-Ala)-di-trans,octa-cis-undecaprenyl diphosphate = [GlcNAc-(1-&gt;4)-Mur2Ac(oyl-L-Ala-gamma-D-Glu-L-Lys-D-Ala-D-Ala)](n+1)-di-trans,octa-cis-undecaprenyl diphosphate + di-trans,octa-cis-undecaprenyl diphosphate + H(+). It catalyses the reaction Preferential cleavage: (Ac)2-L-Lys-D-Ala-|-D-Ala. Also transpeptidation of peptidyl-alanyl moieties that are N-acyl substituents of D-alanine.. It participates in cell wall biogenesis; peptidoglycan biosynthesis. In terms of biological role, cell wall formation. Synthesis of cross-linked peptidoglycan from the lipid intermediates. The enzyme has a penicillin-insensitive transglycosylase N-terminal domain (formation of linear glycan strands) and a penicillin-sensitive transpeptidase C-terminal domain (cross-linking of the peptide subunits). This chain is Penicillin-binding protein 1A (mrcA), found in Rickettsia conorii (strain ATCC VR-613 / Malish 7).